Consider the following 210-residue polypeptide: Fibrillarin-like rRNA/tRNA 2'-O-methyltransferase (210 aa).

Residues 1 to 34 (MTLPSGVERHDFGGETSLATQGQPVYGERTDGDW) form a disordered region. S-adenosyl-L-methionine-binding positions include 71 to 72 (TT), 87 to 88 (EF), 112 to 113 (DA), and 132 to 135 (DVAT).

Belongs to the methyltransferase superfamily. Fibrillarin family. In terms of assembly, interacts with nop5. Component of box C/D small ribonucleoprotein (sRNP) particles that contain rpl7ae, FlpA and nop5, plus a guide RNA.

Its function is as follows. Involved in pre-rRNA and tRNA processing. Utilizes the methyl donor S-adenosyl-L-methionine to catalyze the site-specific 2'-hydroxyl methylation of ribose moieties in rRNA and tRNA. Site specificity is provided by a guide RNA that base pairs with the substrate. Methylation occurs at a characteristic distance from the sequence involved in base pairing with the guide RNA. This chain is Fibrillarin-like rRNA/tRNA 2'-O-methyltransferase, found in Haloarcula marismortui (strain ATCC 43049 / DSM 3752 / JCM 8966 / VKM B-1809) (Halobacterium marismortui).